The chain runs to 274 residues: Diaminopimelate epimerase (274 aa).

Positions 11, 44, and 64 each coordinate substrate. Residue Cys73 is the Proton donor of the active site. Residues 74–75 (GN), Asn157, Asn190, and 208–209 (ER) each bind substrate. The active-site Proton acceptor is the Cys217. 218–219 (GS) lines the substrate pocket.

The protein belongs to the diaminopimelate epimerase family. In terms of assembly, homodimer.

It is found in the cytoplasm. It carries out the reaction (2S,6S)-2,6-diaminopimelate = meso-2,6-diaminopimelate. It functions in the pathway amino-acid biosynthesis; L-lysine biosynthesis via DAP pathway; DL-2,6-diaminopimelate from LL-2,6-diaminopimelate: step 1/1. Its function is as follows. Catalyzes the stereoinversion of LL-2,6-diaminopimelate (L,L-DAP) to meso-diaminopimelate (meso-DAP), a precursor of L-lysine and an essential component of the bacterial peptidoglycan. The protein is Diaminopimelate epimerase of Edwardsiella ictaluri (strain 93-146).